The chain runs to 372 residues: tRNA-specific 2-thiouridylase MnmA 1 (372 aa).

ATP-binding positions include 26–33 (AISGGVDS) and M52. Residue C118 is the Nucleophile of the active site. C118 and C214 are disulfide-bonded. G142 contributes to the ATP binding site. Positions 164–166 (KDQ) are interaction with tRNA. Residue C214 is the Cysteine persulfide intermediate of the active site.

The protein belongs to the MnmA/TRMU family.

It localises to the cytoplasm. It catalyses the reaction S-sulfanyl-L-cysteinyl-[protein] + uridine(34) in tRNA + AH2 + ATP = 2-thiouridine(34) in tRNA + L-cysteinyl-[protein] + A + AMP + diphosphate + H(+). In terms of biological role, catalyzes the 2-thiolation of uridine at the wobble position (U34) of tRNA, leading to the formation of s(2)U34. In Syntrophus aciditrophicus (strain SB), this protein is tRNA-specific 2-thiouridylase MnmA 1.